We begin with the raw amino-acid sequence, 187 residues long: Phosphoheptose isomerase (187 aa).

The SIS domain maps to 34–187 (CIEALKNQKK…ILCSLIDESF (154 aa)). Residue 49–51 (NGG) participates in substrate binding. 2 residues coordinate Zn(2+): H58 and E62. Residues E62, 91–92 (ND), 117–119 (STS), S122, and Q169 contribute to the substrate site. Q169 and H177 together coordinate Zn(2+).

Belongs to the SIS family. GmhA subfamily. In terms of assembly, homotetramer. The cofactor is Zn(2+).

The protein resides in the cytoplasm. It catalyses the reaction 2 D-sedoheptulose 7-phosphate = D-glycero-alpha-D-manno-heptose 7-phosphate + D-glycero-beta-D-manno-heptose 7-phosphate. Its pathway is carbohydrate biosynthesis; D-glycero-D-manno-heptose 7-phosphate biosynthesis; D-glycero-alpha-D-manno-heptose 7-phosphate and D-glycero-beta-D-manno-heptose 7-phosphate from sedoheptulose 7-phosphate: step 1/1. Catalyzes the isomerization of sedoheptulose 7-phosphate in D-glycero-D-manno-heptose 7-phosphate. This Nitratiruptor sp. (strain SB155-2) protein is Phosphoheptose isomerase.